The following is a 597-amino-acid chain: Probable serine/threonine-protein kinase DDB_G0281745 (597 aa).

A compositionally biased stretch (polar residues) spans 49–61; that stretch reads TIDNSNGKQSTTP. Residues 49-320 are disordered; it reads TIDNSNGKQS…RNNESTATTA (272 aa). A compositionally biased stretch (pro residues) spans 72-97; that stretch reads QPPPQQSQQQPPQPLKPIPATRPVPT. Over residues 114-140 the composition is skewed to polar residues; that stretch reads TLPTTNSSTKYSTLPSRQFFEVSSSPG. Residues 157–168 show a composition bias toward low complexity; the sequence is SLSSNQNGSNLN. Residues 208-234 are compositionally biased toward pro residues; the sequence is PSPPSPPLQSPQPTPQQQPPPLKPIPQ. A compositionally biased stretch (low complexity) spans 235 to 264; the sequence is PQQQQQQQQQQQQQQQQQQQQQQQQQQQQQ. Pro residues predominate over residues 265–274; it reads QPPPLKPIPQ. The segment covering 275 to 301 has biased composition (low complexity); it reads PQQSQPTQPIKSQIQIPITNTNGNTNG. A Protein kinase domain is found at 334 to 585; that stretch reads KFVGNEIGSG…KVLDTIQNIY (252 aa). ATP contacts are provided by residues 340–348 and K361; that span reads IGSGKYGSV. The active-site Proton acceptor is the D454.

This sequence belongs to the protein kinase superfamily. TKL Ser/Thr protein kinase family.

It catalyses the reaction L-seryl-[protein] + ATP = O-phospho-L-seryl-[protein] + ADP + H(+). The enzyme catalyses L-threonyl-[protein] + ATP = O-phospho-L-threonyl-[protein] + ADP + H(+). The sequence is that of Probable serine/threonine-protein kinase DDB_G0281745 from Dictyostelium discoideum (Social amoeba).